The following is a 213-amino-acid chain: uncharacterized protein (213 aa).

Residues Gly-53, Glu-74, and Asp-96 each contribute to the S-adenosyl-L-methionine site.

It belongs to the methyltransferase superfamily. YrrT family.

In terms of biological role, could be a S-adenosyl-L-methionine-dependent methyltransferase. This is an uncharacterized protein from Oceanobacillus iheyensis (strain DSM 14371 / CIP 107618 / JCM 11309 / KCTC 3954 / HTE831).